The chain runs to 1435 residues: Nitric oxide synthase 1 (1435 aa).

The segment at M1 to L206 is interaction with NOSIP. One can recognise a PDZ domain in the interval S17–G99. Disordered stretches follow at residues T110–G201 and N277–P304. The interval Q164 to D246 is interaction with DYNLL1/PIN. Positions G290–P300 are enriched in polar residues. (6R)-L-erythro-5,6,7,8-tetrahydrobiopterin is bound at residue S340. Position 421 (C421) interacts with heme b. Residues Q484, W593, Y594, and E598 each contribute to the L-arginine site. V683, W684, and F697 together coordinate (6R)-L-erythro-5,6,7,8-tetrahydrobiopterin. Y712 serves as a coordination point for heme b. Residues K731 to M751 are calmodulin-binding. One can recognise a Flavodoxin-like domain in the interval A761 to F941. FMN contacts are provided by T767, E768, T769, K771, S772, S813, T814, and G818. A phosphoserine mark is found at S853, S863, and S864. Residues S892, H897, C899, E925, and Q929 each coordinate FMN. Residues K996–P1243 enclose the FAD-binding FR-type domain. R1016 is a binding site for NADP(+). FAD-binding residues include H1038, R1179, Y1180, Y1181, S1182, T1197, and A1199. S1202 contributes to the NADP(+) binding site. Y1203, V1216, C1217, and S1218 together coordinate FAD. The NADP(+) site is built by T1257, R1290, S1319, R1320, K1326, Y1328, Q1330, D1363, T1404, and R1406.

Belongs to the NOS family. As to quaternary structure, homodimer. Interacts with DLG4; the interaction possibly being prevented by the association between NOS1 and CAPON. Forms a ternary complex with CAPON and RASD1. Forms a ternary complex with CAPON and SYN1. Interacts with ZDHHC23. Interacts with NOSIP; which may impair its synaptic location. Interacts with HTR4. Interacts with SLC6A4. Interacts with VAC14. Interacts (via N-terminal domain) with DLG4 (via N-terminal tandem pair of PDZ domains). Interacts with SLC6A4. Forms a complex with ASL, ASS1 and SLC7A1; the complex regulates cell-autonomous L-arginine synthesis and citrulline recycling while channeling extracellular L-arginine to nitric oxide synthesis pathway. Interacts with DMD; localizes NOS1 to sarcolemma in muscle cells. Interacts with DYNLL1; inhibits the nitric oxide synthase activity. Requires heme b as cofactor. It depends on FAD as a cofactor. The cofactor is FMN. (6R)-L-erythro-5,6,7,8-tetrahydrobiopterin is required as a cofactor. In terms of processing, ubiquitinated; mediated by STUB1/CHIP in the presence of Hsp70 and Hsp40 (in vitro).

The protein localises to the cell membrane. It is found in the sarcolemma. The protein resides in the cell projection. Its subcellular location is the dendritic spine. It carries out the reaction 2 L-arginine + 3 NADPH + 4 O2 + H(+) = 2 L-citrulline + 2 nitric oxide + 3 NADP(+) + 4 H2O. Stimulated by calcium/calmodulin. Inhibited by DYNLL1 that prevents the dimerization of the protein. Inhibited by NOSIP. Functionally, produces nitric oxide (NO) which is a messenger molecule with diverse functions throughout the body. In the brain and peripheral nervous system, NO displays many properties of a neurotransmitter. Probably has nitrosylase activity and mediates cysteine S-nitrosylation of cytoplasmic target proteins such SRR. In Oryctolagus cuniculus (Rabbit), this protein is Nitric oxide synthase 1 (NOS1).